A 188-amino-acid chain; its full sequence is Ribosomal RNA small subunit methyltransferase G (188 aa).

Residues Gly-69, Phe-74, 119–120, and Arg-134 each bind S-adenosyl-L-methionine; that span reads VQ.

This sequence belongs to the methyltransferase superfamily. RNA methyltransferase RsmG family.

It localises to the cytoplasm. The catalysed reaction is guanosine(527) in 16S rRNA + S-adenosyl-L-methionine = N(7)-methylguanosine(527) in 16S rRNA + S-adenosyl-L-homocysteine. Its function is as follows. Specifically methylates the N7 position of guanine in position 527 of 16S rRNA. This Campylobacter jejuni (strain RM1221) protein is Ribosomal RNA small subunit methyltransferase G.